Consider the following 500-residue polypeptide: Glucose-1-phosphate adenylyltransferase small subunit 1, chloroplastic/amyloplastic (500 aa).

Residues 1–50 (MAMMAMGAASWAPIPAPARAAAAFYPGRDLAAARRRRGAAARRPFVFTPR) constitute a chloroplast transit peptide.

It belongs to the bacterial/plant glucose-1-phosphate adenylyltransferase family. Heterotetramer composed of two small and two large subunits. In terms of tissue distribution, expressed in leaves.

The protein resides in the plastid. The protein localises to the chloroplast. Its subcellular location is the amyloplast. The catalysed reaction is alpha-D-glucose 1-phosphate + ATP + H(+) = ADP-alpha-D-glucose + diphosphate. It functions in the pathway glycan biosynthesis; starch biosynthesis. Its activity is regulated as follows. Activated by 3'phosphoglycerate, inhibited by orthophosphate. Allosteric regulation. In terms of biological role, involved in synthesis of starch. Catalyzes the synthesis of ADP-glucose, a molecule that serves as an activated glycosyl donor for alpha-1,4-glucan synthesis. Essential for starch synthesis in leaf chloroplasts and endosperm amyloplasts. In Oryza sativa subsp. japonica (Rice), this protein is Glucose-1-phosphate adenylyltransferase small subunit 1, chloroplastic/amyloplastic.